We begin with the raw amino-acid sequence, 89 residues long: Insulin (89 aa).

3 cysteine pairs are disulfide-bonded: C7/C75, C19/C88, and C74/C79. Positions 33–66 (DVGPLSAFRDLEPPLDTEMEDRFPYRQQLAGSKM) are cleaved as a propeptide — c peptide.

Belongs to the insulin family. As to quaternary structure, heterodimer of a B chain and an A chain linked by two disulfide bonds.

It localises to the secreted. Insulin decreases blood glucose concentration. It increases cell permeability to monosaccharides, amino acids and fatty acids. It accelerates glycolysis, the pentose phosphate cycle, and glycogen synthesis in liver. This chain is Insulin (ins), found in Callorhinchus milii (Ghost shark).